A 126-amino-acid polypeptide reads, in one-letter code: MAIRIVGVDLPQNKRGFIALTYIYGIGRSSAITILDKAGVDRDIKVKDWSDDQAAAIRDVIGAGYKVEGDLRSEVQLNIKRLMDIGCYRGIRHRIGLPLRGQSTKNNARTRKGKKKTVANKKKATK.

A disordered region spans residues 99 to 126; the sequence is LRGQSTKNNARTRKGKKKTVANKKKATK. The span at 108–126 shows a compositional bias: basic residues; that stretch reads ARTRKGKKKTVANKKKATK.

It belongs to the universal ribosomal protein uS13 family. Part of the 30S ribosomal subunit. Forms a loose heterodimer with protein S19. Forms two bridges to the 50S subunit in the 70S ribosome.

Its function is as follows. Located at the top of the head of the 30S subunit, it contacts several helices of the 16S rRNA. In the 70S ribosome it contacts the 23S rRNA (bridge B1a) and protein L5 of the 50S subunit (bridge B1b), connecting the 2 subunits; these bridges are implicated in subunit movement. Contacts the tRNAs in the A and P-sites. The protein is Small ribosomal subunit protein uS13 of Porphyromonas gingivalis (strain ATCC 33277 / DSM 20709 / CIP 103683 / JCM 12257 / NCTC 11834 / 2561).